A 411-amino-acid chain; its full sequence is Probable phosphatase HAD1 (411 aa).

A compositionally biased stretch (polar residues) spans 14 to 23; that stretch reads LPSPNTSQPP. Residues 14–33 are disordered; sequence LPSPNTSQPPSAAPSRRGSF. The active-site Nucleophile is the D61. Residues D61, D63, and D338 each coordinate Mg(2+). The active-site Proton donor is the D63. The tract at residues 296-386 is disordered; that stretch reads PRPTPDVTPV…QSGQAGVTLD (91 aa). Over residues 326–345 the composition is skewed to polar residues; that stretch reads VRNTQTIMKGSDDLTGNDSV. Residues 362–373 are compositionally biased toward basic and acidic residues; sequence SVEKRAEMEFHR.

Belongs to the HAD-like hydrolase superfamily. In terms of processing, phosphorylated.

Probable phosphatase. Required for cell wall integrity and virulence. This chain is Probable phosphatase HAD1, found in Cryptococcus neoformans var. grubii serotype A (strain H99 / ATCC 208821 / CBS 10515 / FGSC 9487) (Filobasidiella neoformans var. grubii).